We begin with the raw amino-acid sequence, 77 residues long: Translation initiation factor IF-1, chloroplastic (77 aa).

An S1-like domain is found at 1-71; sequence MKEQKLIHEG…TKGRIIYRLR (71 aa).

The protein belongs to the IF-1 family. As to quaternary structure, component of the 30S ribosomal translation pre-initiation complex which assembles on the 30S ribosome in the order IF-2 and IF-3, IF-1 and N-formylmethionyl-tRNA(fMet); mRNA recruitment can occur at any time during PIC assembly.

It localises to the plastid. It is found in the chloroplast. One of the essential components for the initiation of protein synthesis. Stabilizes the binding of IF-2 and IF-3 on the 30S subunit to which N-formylmethionyl-tRNA(fMet) subsequently binds. Helps modulate mRNA selection, yielding the 30S pre-initiation complex (PIC). Upon addition of the 50S ribosomal subunit IF-1, IF-2 and IF-3 are released leaving the mature 70S translation initiation complex. The chain is Translation initiation factor IF-1, chloroplastic from Dioscorea elephantipes (Elephant's foot yam).